A 974-amino-acid polypeptide reads, in one-letter code: ATP-dependent RNA helicase DBP7 (974 aa).

The disordered stretch occupies residues 1 to 135; sequence MDDNDDGLML…SSAASSSRKA (135 aa). Residues 13–24 show a composition bias toward low complexity; that stretch reads AAPAAGSASVSS. Positions 25–48 are enriched in basic residues; that stretch reads KRSKQTAKARFAQKRTAHQLRKQA. Low complexity-rich tracts occupy residues 67–85, 92–102, and 118–133; these read PASA…SPAA, ATSTSSAALSA, and TSRS…SSSR. The Q motif signature appears at 200 to 230; it reads SDFASCGLDPLLVYHLASKMNIGSNPTAIQK. Positions 236-477 constitute a Helicase ATP-binding domain; that stretch reads LLHPGLDRDI…GKTLVNPKII (242 aa). 249–256 provides a ligand contact to ATP; sequence AQTGSGKT. The DEAD box signature appears at 381-384; it reads DEAD. The region spanning 531 to 747 is the Helicase C-terminal domain; it reads LLRSYISRAR…TRKITPASIE (217 aa). Residues 836-887 are disordered; the sequence is KSSAIGASSTPASSHETTNKKRMRIAPDTAESDSSSDSSDDAGSDYESHSNK. Residues 840-851 show a composition bias toward polar residues; that stretch reads IGASSTPASSHE.

Belongs to the DEAD box helicase family. DDX31/DBP7 subfamily.

It is found in the nucleus. The protein localises to the nucleolus. It catalyses the reaction ATP + H2O = ADP + phosphate + H(+). In terms of biological role, ATP-binding RNA helicase involved in the biogenesis of 60S ribosomal subunits and is required for the normal formation of 25S and 5.8S rRNAs. The polypeptide is ATP-dependent RNA helicase DBP7 (DBP7) (Mycosarcoma maydis (Corn smut fungus)).